Reading from the N-terminus, the 396-residue chain is DNA-directed RNA polymerase subunit 6 (396 aa).

Disordered regions lie at residues 1-137 and 290-396; these read MSSK…DIED and NQQK…DYSE. Composition is skewed to acidic residues over residues 21–53, 76–88, and 97–137; these read EYYD…DDEN, IDPD…DTDG, and EMGE…DIED. Residues 290 to 312 show a composition bias toward polar residues; sequence NQQKNSTTDTETLSTQENASTRV. 2 stretches are compositionally biased toward low complexity: residues 313-338 and 346-366; these read SGSN…SKSN and NSRT…SRTG. Over residues 367-380 the composition is skewed to basic residues; it reads SKSKKSSNTKSKSK. A compositionally biased stretch (acidic residues) spans 385–396; the sequence is NSDDSDYSDYSE.

It belongs to the archaeal Rpo6/eukaryotic RPB6 RNA polymerase subunit family.

It catalyses the reaction RNA(n) + a ribonucleoside 5'-triphosphate = RNA(n+1) + diphosphate. In terms of biological role, DNA-dependent RNA polymerase catalyzes the transcription of DNA into RNA using the four ribonucleoside triphosphates as substrates. In Acanthamoeba polyphaga (Amoeba), this protein is DNA-directed RNA polymerase subunit 6.